A 223-amino-acid chain; its full sequence is Deoxyribose-phosphate aldolase (223 aa).

D89 functions as the Proton donor/acceptor in the catalytic mechanism. K152 serves as the catalytic Schiff-base intermediate with acetaldehyde. K181 (proton donor/acceptor) is an active-site residue.

This sequence belongs to the DeoC/FbaB aldolase family. DeoC type 1 subfamily.

It is found in the cytoplasm. It catalyses the reaction 2-deoxy-D-ribose 5-phosphate = D-glyceraldehyde 3-phosphate + acetaldehyde. Its pathway is carbohydrate degradation; 2-deoxy-D-ribose 1-phosphate degradation; D-glyceraldehyde 3-phosphate and acetaldehyde from 2-deoxy-alpha-D-ribose 1-phosphate: step 2/2. Catalyzes a reversible aldol reaction between acetaldehyde and D-glyceraldehyde 3-phosphate to generate 2-deoxy-D-ribose 5-phosphate. The chain is Deoxyribose-phosphate aldolase from Listeria monocytogenes serotype 4a (strain HCC23).